The chain runs to 1020 residues: Tetrathionate reductase subunit A (1020 aa).

A signal peptide (tat-type signal) is located at residues 1–33 (MANLTRRQWLKVGLAVGGMVTFGLSYRDVAKRA). The 84-residue stretch at 71–154 (QTIAMTQCFG…TLLESLYSPL (84 aa)) folds into the 4Fe-4S Mo/W bis-MGD-type domain. Positions 78, 81, 85, and 140 each coordinate [4Fe-4S] cluster.

This sequence belongs to the prokaryotic molybdopterin-containing oxidoreductase family. As to quaternary structure, probably composed of three subunits: TtrA, TtrB and TtrC. Requires [4Fe-4S] cluster as cofactor. Mo-bis(molybdopterin guanine dinucleotide) serves as cofactor. Predicted to be exported by the Tat system. The position of the signal peptide cleavage has not been experimentally proven.

It is found in the periplasm. Its subcellular location is the cell inner membrane. In terms of biological role, part of a membrane-bound tetrathionate reductase that catalyzes the reduction of tetrathionate to thiosulfate. TtrA is the catalytic subunit. During mice infection, the ability to use tetrathionate as an electron acceptor is a growth advantage for S.typhimurium over the competing microbiota in the lumen of the inflamed gut. The sequence is that of Tetrathionate reductase subunit A (ttrA) from Salmonella typhimurium (strain LT2 / SGSC1412 / ATCC 700720).